A 244-amino-acid polypeptide reads, in one-letter code: Chalcone--flavanone isomerase (244 aa).

Substrate contacts are provided by Thr57, Asn122, and Ser199.

This sequence belongs to the chalcone isomerase family.

The enzyme catalyses a chalcone = a flavanone.. Its pathway is secondary metabolite biosynthesis; flavonoid biosynthesis. Its function is as follows. Catalyzes the intramolecular cyclization of bicyclic chalcones into tricyclic (S)-flavanones. Responsible for the isomerization of 4,2',4',6'-tetrahydroxychalcone (also termed chalcone) into naringenin. The chain is Chalcone--flavanone isomerase (CHI) from Arabidopsis lyrata subsp. petraea (Northern rock-cress).